The chain runs to 30 residues: Methanobactin mb-OB3b (30 aa).

Positions 1 to 19 (MTVKIAQKKVLPVIGRAAA) are excised as a propeptide. Residues 20–21 (LC) constitute a cross-link (2-(3-methylbutanoyl)-5-hydroxyoxazole-4-carbothionic acid (Leu-Cys)). The Cu(2+) site is built by cysteine 21 and cysteine 27. Cysteine 24 and cysteine 29 are joined by a disulfide. The proline 5-hydroxy-oxazole-4-carbothionic acid (Pro-Cys) cross-link spans 26–27 (PC).

As to quaternary structure, monomer. In the absence of copper, may exist as a dimer or an oligomer.

It is found in the secreted. The protein localises to the cytoplasm. The catalysed reaction is 2 superoxide + 2 H(+) = H2O2 + O2. Functionally, chalkophore involved in scavenging, uptake and suppression of toxicity of copper. Each apo-methanobactin (apo-mb) complexes 1 Cu(2+) or Cu(1+) ion to form Cu(1+)-mb (Cu-mb) which is then taken up by the cell. Enhances growth rate in the presence of copper and reduces growth lag upon exposition to elevated levels of copper. Cu-mb contributes to the switchover from soluble methane monooxygenase (sMMO) to the membrane-bound particulate MMO (pMMO) by inducing transcription of pMMO subunit A. It also stimulates the enzymatic activity of pMMO. In the absence of copper, binds other metal ions, like Zn(2+), Ag(1+), Au(3+), Co(2+), Cd(2+), Fe(3+), Hg(2+), Mn(2+), Ni(2+), Pb(2+) or U(6+), but not Ba(2+), Ca(2+), La(2+), Mg(2+) or Sr(2+). Uptake is an active process, which may involve TonB-dependent transporters, and as such does not involve porins. Cu-Mb can be taken up by other methanotrophic bacteria but not by E.coli. Has Cu-dependent superoxide dismutase-like activity. Shows reductant-dependent oxidase and hydrogen peroxide reductase activities. Reduces copper-levels in liver in a rat model of Wilson disease. This is Methanobactin mb-OB3b from Methylosinus trichosporium.